The following is a 340-amino-acid chain: Methionine import ATP-binding protein MetN 2 (340 aa).

Residues 2-241 (ITLQNVVKEY…PQEKVTQRFV (240 aa)) enclose the ABC transporter domain. 38–45 (GYSGAGKS) lines the ATP pocket.

The protein belongs to the ABC transporter superfamily. Methionine importer (TC 3.A.1.24) family. As to quaternary structure, the complex is composed of two ATP-binding proteins (MetN), two transmembrane proteins (MetI) and a solute-binding protein (MetQ).

It localises to the cell membrane. The enzyme catalyses L-methionine(out) + ATP + H2O = L-methionine(in) + ADP + phosphate + H(+). It carries out the reaction D-methionine(out) + ATP + H2O = D-methionine(in) + ADP + phosphate + H(+). Functionally, part of the ABC transporter complex MetNIQ involved in methionine import. Responsible for energy coupling to the transport system. This Listeria monocytogenes serovar 1/2a (strain ATCC BAA-679 / EGD-e) protein is Methionine import ATP-binding protein MetN 2.